The primary structure comprises 291 residues: Release factor glutamine methyltransferase (291 aa).

Residues 127–131, Asp-150, Trp-179, and Asn-196 contribute to the S-adenosyl-L-methionine site; that span reads GTGSG. A substrate-binding site is contributed by 196–199; sequence NPPY.

This sequence belongs to the protein N5-glutamine methyltransferase family. PrmC subfamily.

The catalysed reaction is L-glutaminyl-[peptide chain release factor] + S-adenosyl-L-methionine = N(5)-methyl-L-glutaminyl-[peptide chain release factor] + S-adenosyl-L-homocysteine + H(+). Methylates the class 1 translation termination release factors RF1/PrfA and RF2/PrfB on the glutamine residue of the universally conserved GGQ motif. The chain is Release factor glutamine methyltransferase from Thermosynechococcus vestitus (strain NIES-2133 / IAM M-273 / BP-1).